The sequence spans 240 residues: 2,3,4,5-tetrahydropyridine-2,6-dicarboxylate N-acetyltransferase (240 aa).

This sequence belongs to the transferase hexapeptide repeat family. DapH subfamily.

It catalyses the reaction (S)-2,3,4,5-tetrahydrodipicolinate + acetyl-CoA + H2O = L-2-acetamido-6-oxoheptanedioate + CoA. It participates in amino-acid biosynthesis; L-lysine biosynthesis via DAP pathway; LL-2,6-diaminopimelate from (S)-tetrahydrodipicolinate (acetylase route): step 1/3. Functionally, catalyzes the transfer of an acetyl group from acetyl-CoA to tetrahydrodipicolinate. The chain is 2,3,4,5-tetrahydropyridine-2,6-dicarboxylate N-acetyltransferase from Staphylococcus epidermidis (strain ATCC 35984 / DSM 28319 / BCRC 17069 / CCUG 31568 / BM 3577 / RP62A).